The chain runs to 335 residues: Histidinol-phosphatase (335 aa).

It belongs to the PHP hydrolase family. HisK subfamily.

The enzyme catalyses L-histidinol phosphate + H2O = L-histidinol + phosphate. It functions in the pathway amino-acid biosynthesis; L-histidine biosynthesis; L-histidine from 5-phospho-alpha-D-ribose 1-diphosphate: step 8/9. The chain is Histidinol-phosphatase (HIS2) from Saccharomyces cerevisiae (strain ATCC 204508 / S288c) (Baker's yeast).